The chain runs to 354 residues: NADPH dehydrogenase (354 aa).

Residues Ser23, Pro24, Cys26, Ala58, and Gln100 each contribute to the FMN site. Tyr182 acts as the Proton donor in catalysis. 4 residues coordinate FMN: Arg230, Leu301, Gly323, and Arg324.

The protein belongs to the NADH:flavin oxidoreductase/NADH oxidase family. NamA subfamily. In terms of assembly, homodimer. Behaves as an active monomer in solution while in the crystal packing assembles following the classical dimeric architecture of other thermophilic-like ene-reductases. FMN is required as a cofactor.

It catalyses the reaction A + NADPH + H(+) = AH2 + NADP(+). In terms of biological role, ene-reductase that catalyzes the stereoselective reduction of activated C-C double bonds. Shows very good activity with 4-ketoisophorone, 2-cyclohexen-1-one and 1-octen-3-one, and low activity with maleimide, 2-methyl-pentenal, 2-methyl-cyclohexen-1-one, 2-cyclopenten-1-one and trans-2-hexen-1-al. Shows the highest catalytic efficiency with ketoisophorone. Exhibits a restricted substrate spectrum with generally lower activities compared to other ene-reductases. In Chloroflexus aggregans (strain MD-66 / DSM 9485), this protein is NADPH dehydrogenase.